The chain runs to 278 residues: 4-deoxy-L-threo-5-hexosulose-uronate ketol-isomerase (278 aa).

Residues His196, His198, Glu203, and His245 each coordinate Zn(2+).

This sequence belongs to the KduI family. The cofactor is Zn(2+).

The enzyme catalyses 5-dehydro-4-deoxy-D-glucuronate = 3-deoxy-D-glycero-2,5-hexodiulosonate. It functions in the pathway glycan metabolism; pectin degradation; 2-dehydro-3-deoxy-D-gluconate from pectin: step 4/5. Functionally, catalyzes the isomerization of 5-dehydro-4-deoxy-D-glucuronate to 3-deoxy-D-glycero-2,5-hexodiulosonate. This chain is 4-deoxy-L-threo-5-hexosulose-uronate ketol-isomerase, found in Salmonella paratyphi A (strain ATCC 9150 / SARB42).